We begin with the raw amino-acid sequence, 276 residues long: Neuroendocrine protein 7B2 (276 aa).

A disulfide bond links C155 and C168.

The protein belongs to the 7B2 family. As to quaternary structure, interacts with amon/PC2 early in the secretory pathway. Dissociation occurs at later stages.

The protein localises to the secreted. Acts as a molecular chaperone for neuroendocrine convertase amon/PC2, preventing its premature activation in the regulated secretory pathway. Binds to inactive amon in the endoplasmic reticulum and facilitates its transport from there to later compartments of the secretory pathway where it is proteolytically matured and activated. Also required for cleavage of amon. The sequence is that of Neuroendocrine protein 7B2 from Drosophila melanogaster (Fruit fly).